Reading from the N-terminus, the 323-residue chain is 4-hydroxy-3-methylbut-2-enyl diphosphate reductase (323 aa).

Residue Cys-13 participates in [4Fe-4S] cluster binding. 2 residues coordinate (2E)-4-hydroxy-3-methylbut-2-enyl diphosphate: His-42 and His-75. Positions 42 and 75 each coordinate dimethylallyl diphosphate. 2 residues coordinate isopentenyl diphosphate: His-42 and His-75. Cys-97 provides a ligand contact to [4Fe-4S] cluster. Position 125 (His-125) interacts with (2E)-4-hydroxy-3-methylbut-2-enyl diphosphate. His-125 provides a ligand contact to dimethylallyl diphosphate. His-125 serves as a coordination point for isopentenyl diphosphate. The Proton donor role is filled by Glu-127. Thr-168 is a binding site for (2E)-4-hydroxy-3-methylbut-2-enyl diphosphate. [4Fe-4S] cluster is bound at residue Cys-198. The (2E)-4-hydroxy-3-methylbut-2-enyl diphosphate site is built by Ser-226, Ser-227, Asn-228, and Ser-270. Dimethylallyl diphosphate is bound by residues Ser-226, Ser-227, Asn-228, and Ser-270. Isopentenyl diphosphate-binding residues include Ser-226, Ser-227, Asn-228, and Ser-270.

This sequence belongs to the IspH family. [4Fe-4S] cluster is required as a cofactor.

The enzyme catalyses isopentenyl diphosphate + 2 oxidized [2Fe-2S]-[ferredoxin] + H2O = (2E)-4-hydroxy-3-methylbut-2-enyl diphosphate + 2 reduced [2Fe-2S]-[ferredoxin] + 2 H(+). It carries out the reaction dimethylallyl diphosphate + 2 oxidized [2Fe-2S]-[ferredoxin] + H2O = (2E)-4-hydroxy-3-methylbut-2-enyl diphosphate + 2 reduced [2Fe-2S]-[ferredoxin] + 2 H(+). It participates in isoprenoid biosynthesis; dimethylallyl diphosphate biosynthesis; dimethylallyl diphosphate from (2E)-4-hydroxy-3-methylbutenyl diphosphate: step 1/1. The protein operates within isoprenoid biosynthesis; isopentenyl diphosphate biosynthesis via DXP pathway; isopentenyl diphosphate from 1-deoxy-D-xylulose 5-phosphate: step 6/6. Catalyzes the conversion of 1-hydroxy-2-methyl-2-(E)-butenyl 4-diphosphate (HMBPP) into a mixture of isopentenyl diphosphate (IPP) and dimethylallyl diphosphate (DMAPP). Acts in the terminal step of the DOXP/MEP pathway for isoprenoid precursor biosynthesis. The polypeptide is 4-hydroxy-3-methylbut-2-enyl diphosphate reductase (Nitrosomonas europaea (strain ATCC 19718 / CIP 103999 / KCTC 2705 / NBRC 14298)).